We begin with the raw amino-acid sequence, 165 residues long: Putative pre-16S rRNA nuclease (165 aa).

Belongs to the YqgF nuclease family.

Its subcellular location is the cytoplasm. Functionally, could be a nuclease involved in processing of the 5'-end of pre-16S rRNA. The protein is Putative pre-16S rRNA nuclease of Rhizobium meliloti (strain 1021) (Ensifer meliloti).